A 482-amino-acid chain; its full sequence is Matrix metalloproteinase-20 (482 aa).

A signal peptide spans 1 to 21 (MKVLPASGLAVLVTALKFATA). A propeptide spanning residues 22–106 (DPNLLAATPR…PRCGVPDVAN (85 aa)) is cleaved from the precursor. Residues 97–104 (PRCGVPDV) carry the Cysteine switch motif. Cysteine 99 is a Zn(2+) binding site. Ca(2+) is bound by residues glutamate 163, alanine 164, and aspartate 165. Residues histidine 175 and aspartate 177 each coordinate Zn(2+). Residues aspartate 182, glycine 183, arginine 185, and threonine 187 each contribute to the Ca(2+) site. Histidine 190 serves as a coordination point for Zn(2+). 4 residues coordinate Ca(2+): glutamate 196, glycine 197, glycine 199, and aspartate 201. Histidine 203 is a Zn(2+) binding site. Positions 205 and 208 each coordinate Ca(2+). Histidine 225 provides a ligand contact to Zn(2+). The active site involves glutamate 226. Histidine 229 and histidine 235 together coordinate Zn(2+). Hemopexin repeat units lie at residues 292–342 (PDLC…FPQL), 343–388 (MSNV…GFPR), 390–438 (VQRI…FSGV), and 439–482 (SGHI…WIGC). A disulfide bridge connects residues cysteine 295 and cysteine 482.

The protein belongs to the peptidase M10A family. Requires Zn(2+) as cofactor. Ca(2+) is required as a cofactor. Autoactivates at least at the 106-Asn-|-Tyr-107 site. Expressed in the enamel organ.

Its subcellular location is the secreted. The protein resides in the extracellular space. It localises to the extracellular matrix. Functionally, degrades amelogenin, the major protein component of the enamel matrix and two of the macromolecules characterizing the cartilage extracellular matrix: aggrecan and the cartilage oligomeric matrix protein (COMP). May play a central role in tooth enamel formation. Cleaves aggrecan at the '360-Asn-|-Phe-361' site. The protein is Matrix metalloproteinase-20 (Mmp20) of Mus musculus (Mouse).